The primary structure comprises 167 residues: NAD(P)H-quinone oxidoreductase subunit I, chloroplastic (167 aa).

2 consecutive 4Fe-4S ferredoxin-type domains span residues 55 to 84 and 95 to 124; these read GRIH…VDWK and LNYS…MTEE. Residues Cys-64, Cys-67, Cys-70, Cys-74, Cys-104, Cys-107, Cys-110, and Cys-114 each coordinate [4Fe-4S] cluster.

This sequence belongs to the complex I 23 kDa subunit family. NDH is composed of at least 16 different subunits, 5 of which are encoded in the nucleus. [4Fe-4S] cluster serves as cofactor.

Its subcellular location is the plastid. The protein localises to the chloroplast thylakoid membrane. The enzyme catalyses a plastoquinone + NADH + (n+1) H(+)(in) = a plastoquinol + NAD(+) + n H(+)(out). It carries out the reaction a plastoquinone + NADPH + (n+1) H(+)(in) = a plastoquinol + NADP(+) + n H(+)(out). Functionally, NDH shuttles electrons from NAD(P)H:plastoquinone, via FMN and iron-sulfur (Fe-S) centers, to quinones in the photosynthetic chain and possibly in a chloroplast respiratory chain. The immediate electron acceptor for the enzyme in this species is believed to be plastoquinone. Couples the redox reaction to proton translocation, and thus conserves the redox energy in a proton gradient. This is NAD(P)H-quinone oxidoreductase subunit I, chloroplastic from Aethionema cordifolium (Lebanon stonecress).